The following is a 282-amino-acid chain: Phosphatidylglycerol--prolipoprotein diacylglyceryl transferase (282 aa).

The next 4 helical transmembrane spans lie at 19-39, 59-79, 90-110, and 120-140; these read IGPITIRWYGLLIATAVLIGV, LSIWLVIGAIPAARIYYVLFQ, IIAIWQGGIAIHGAIIGGTLA, and VPFWQLADLVAPSLILGQAIG. Residue R141 participates in a 1,2-diacyl-sn-glycero-3-phospho-(1'-sn-glycerol) binding. The next 3 membrane-spanning stretches (helical) occupy residues 181–201, 212–232, and 245–265; these read TFLYESIWDLMVFALLITLFF, VGTLFMVYLATYSLGRLWIEG, and IAQVVSLTGITLGLAGLAWLY.

The protein belongs to the Lgt family.

The protein resides in the cell inner membrane. The catalysed reaction is L-cysteinyl-[prolipoprotein] + a 1,2-diacyl-sn-glycero-3-phospho-(1'-sn-glycerol) = an S-1,2-diacyl-sn-glyceryl-L-cysteinyl-[prolipoprotein] + sn-glycerol 1-phosphate + H(+). It participates in protein modification; lipoprotein biosynthesis (diacylglyceryl transfer). In terms of biological role, catalyzes the transfer of the diacylglyceryl group from phosphatidylglycerol to the sulfhydryl group of the N-terminal cysteine of a prolipoprotein, the first step in the formation of mature lipoproteins. This is Phosphatidylglycerol--prolipoprotein diacylglyceryl transferase from Trichormus variabilis (strain ATCC 29413 / PCC 7937) (Anabaena variabilis).